The following is a 291-amino-acid chain: 4-hydroxy-tetrahydrodipicolinate synthase (291 aa).

Pyruvate is bound at residue Thr44. Tyr132 acts as the Proton donor/acceptor in catalysis. The active-site Schiff-base intermediate with substrate is Lys160. Ile202 lines the pyruvate pocket.

The protein belongs to the DapA family. In terms of assembly, homotetramer; dimer of dimers.

The protein localises to the cytoplasm. It carries out the reaction L-aspartate 4-semialdehyde + pyruvate = (2S,4S)-4-hydroxy-2,3,4,5-tetrahydrodipicolinate + H2O + H(+). It participates in amino-acid biosynthesis; L-lysine biosynthesis via DAP pathway; (S)-tetrahydrodipicolinate from L-aspartate: step 3/4. In terms of biological role, catalyzes the condensation of (S)-aspartate-beta-semialdehyde [(S)-ASA] and pyruvate to 4-hydroxy-tetrahydrodipicolinate (HTPA). This Syntrophobacter fumaroxidans (strain DSM 10017 / MPOB) protein is 4-hydroxy-tetrahydrodipicolinate synthase.